A 1070-amino-acid polypeptide reads, in one-letter code: DNA-directed RNA polymerase subunit beta (1070 aa).

Belongs to the RNA polymerase beta chain family. In terms of assembly, in plastids the minimal PEP RNA polymerase catalytic core is composed of four subunits: alpha, beta, beta', and beta''. When a (nuclear-encoded) sigma factor is associated with the core the holoenzyme is formed, which can initiate transcription.

It is found in the plastid. The protein resides in the chloroplast. The enzyme catalyses RNA(n) + a ribonucleoside 5'-triphosphate = RNA(n+1) + diphosphate. In terms of biological role, DNA-dependent RNA polymerase catalyzes the transcription of DNA into RNA using the four ribonucleoside triphosphates as substrates. The sequence is that of DNA-directed RNA polymerase subunit beta from Nicotiana sylvestris (Wood tobacco).